Consider the following 452-residue polypeptide: Plasmepsin I (452 aa).

The Cytoplasmic segment spans residues 1–37 (MALSIKEDFSSAFAKNESAVNSSTFNNNMKTWKIQKR). Positions 1-123 (MALSIKEDFS…TGLTQKPHLG (123 aa)) are excised as a propeptide. The helical; Signal-anchor for type II membrane protein transmembrane segment at 38–58 (FQILYVFFFLLITGALFYYLI) threads the bilayer. Residues 59–452 (DNVLFPKNKK…VGFALAKKKL (394 aa)) are Lumenal-facing. Positions 139–446 (YYGEAQIGDN…DYDNHTVGFA (308 aa)) constitute a Peptidase A1 domain. Asp-157 is an active-site residue. The cysteines at positions 170 and 175 are disulfide-linked. Asp-337 is a catalytic residue. A disulfide bridge links Cys-372 with Cys-408.

It belongs to the peptidase A1 family. Not N-glycosylated. In terms of processing, proteolytically cleaved into the soluble active mature form in the digestive vacuole by cysteine protease falcipains; the process begins at the early ring stage. Proteolysis requires an acidic environment.

It localises to the membrane. The protein localises to the vacuole lumen. The protein resides in the vacuole membrane. The enzyme catalyses Hydrolysis of the 33-Phe-|-Leu-34 bond in the alpha-chain of hemoglobin, leading to denaturation of molecule.. With respect to regulation, inhibited by KNI derived compounds KNI-10333 and to a lesser extent KNI-10743. During the asexual blood stage, catalyzes the initial cleavage of native host hemoglobin (Hb) resulting in Hb denaturation; specifically cleaves between Phe-33 and Leu-34 of Hb alpha-chain. Digestion of host Hb is an essential step which provides the parasite with amino acids for protein synthesis, and regulates osmolarity. The protein is Plasmepsin I of Plasmodium falciparum (isolate 3D7).